A 458-amino-acid polypeptide reads, in one-letter code: Ribosomal protein uS12 methylthiotransferase RimO (458 aa).

In terms of domain architecture, MTTase N-terminal spans 6 to 116; it reads PKVGFVSLGC…VMEAVHAALP (111 aa). The [4Fe-4S] cluster site is built by Cys-15, Cys-51, Cys-80, Cys-147, Cys-151, and Cys-154. Residues 133-371 enclose the Radical SAM core domain; that stretch reads LTPRHYAYLK…AKQAQISALR (239 aa). Residues 373–441 form the TRAM domain; the sequence is ESKIGSVQQC…EHDLFGDALP (69 aa).

It belongs to the methylthiotransferase family. RimO subfamily. The cofactor is [4Fe-4S] cluster.

Its subcellular location is the cytoplasm. It catalyses the reaction L-aspartate(89)-[ribosomal protein uS12]-hydrogen + (sulfur carrier)-SH + AH2 + 2 S-adenosyl-L-methionine = 3-methylsulfanyl-L-aspartate(89)-[ribosomal protein uS12]-hydrogen + (sulfur carrier)-H + 5'-deoxyadenosine + L-methionine + A + S-adenosyl-L-homocysteine + 2 H(+). In terms of biological role, catalyzes the methylthiolation of an aspartic acid residue of ribosomal protein uS12. The polypeptide is Ribosomal protein uS12 methylthiotransferase RimO (Xanthomonas euvesicatoria pv. vesicatoria (strain 85-10) (Xanthomonas campestris pv. vesicatoria)).